We begin with the raw amino-acid sequence, 656 residues long: uncharacterized protein (656 aa).

Residues 623–656 (EIDIPGTPASIDPEWSRPPGSITDDHVFDAPLHR) form a disordered region. Residues 645–656 (TDDHVFDAPLHR) are compositionally biased toward basic and acidic residues.

This is an uncharacterized protein from Mycobacterium tuberculosis (strain CDC 1551 / Oshkosh).